Reading from the N-terminus, the 142-residue chain is Large ribosomal subunit protein uL13 (142 aa).

Belongs to the universal ribosomal protein uL13 family. In terms of assembly, part of the 50S ribosomal subunit.

Its function is as follows. This protein is one of the early assembly proteins of the 50S ribosomal subunit, although it is not seen to bind rRNA by itself. It is important during the early stages of 50S assembly. The protein is Large ribosomal subunit protein uL13 of Pyrococcus horikoshii (strain ATCC 700860 / DSM 12428 / JCM 9974 / NBRC 100139 / OT-3).